The chain runs to 60 residues: Large ribosomal subunit protein bL32 (60 aa).

Residues 1-60 (MAVQQNKKSPSKRGMHRSHNALTVPGIAVEPTTGETHMRHHISPNGFYRGRQVLKNKSEA) are disordered. Over residues 9 to 19 (SPSKRGMHRSH) the composition is skewed to basic residues.

The protein belongs to the bacterial ribosomal protein bL32 family.

The sequence is that of Large ribosomal subunit protein bL32 from Acidovorax ebreus (strain TPSY) (Diaphorobacter sp. (strain TPSY)).